The sequence spans 1431 residues: Caskin-1 (1431 aa).

ANK repeat units lie at residues 48–77 (DGFSALHHAALNGNTELISLLLEAQAAVDI), 81–110 (KGMRPLHYAAWQGRKEPMKLVLKAGSAVNV), 114–143 (EGHIPLHLAAQHGHYDVSEMLLQHQSNPCM), 147–176 (SGKTPLDLACEFGRVGVVQLLLSSNMCAAL), 188–217 (NGTSPLHLAAKNGHIDIIRLLLQAGIDINR), and 220–249 (KSGTALHEAALCGKTEVVRLLLDSGINAQV). Tyr253 is modified (phosphotyrosine). The SH3 domain maps to 281–347 (SAALQVRATK…PSSLGEAIVK (67 aa)). The segment at 348 to 372 (RAGSRTGSEPSPPQGGGSLGPSAPP) is disordered. Ser358 is modified (phosphoserine). The CASK-binding stretch occupies residues 375–471 (IWVLRKPFAG…PKKLESASAS (97 aa)). Arg398 carries the post-translational modification Omega-N-methylarginine. Over residues 420 to 430 (SQKSVSESSPG) the composition is skewed to polar residues. The interval 420–471 (SQKSVSESSPGDSPVKPPEGSSGAARSQPPAAHAGQVYGEQPPKKLESASAS) is disordered. 2 positions are modified to phosphoserine: Ser423 and Ser432. SAM domains are found at residues 476–539 (KSAE…LNIP) and 545–609 (HKPA…LAEL). Ser637 and Ser650 each carry phosphoserine. Residues 669–679 (LSGPAEAGAAA) show a composition bias toward low complexity. Disordered regions lie at residues 669 to 1000 (LSGP…TGSA) and 1016 to 1041 (GGGGRAIRRPPEGHPTPRPASPEPGR). Positions 692 to 712 (RTTSRESSLSGRARHISSSQE) are enriched in polar residues. Ser723 and Ser728 each carry phosphoserine. Thr741 carries the post-translational modification Phosphothreonine. Phosphoserine is present on Ser791. Positions 848-860 (PPAPGPAPPPVPA) are enriched in pro residues. Residues Ser891, Ser893, and Ser989 each carry the phosphoserine modification. Pro residues predominate over residues 1028 to 1037 (GHPTPRPASP). Position 1067 is a phosphothreonine (Thr1067). Phosphoserine is present on Ser1069. 2 disordered regions span residues 1072-1372 (VTGL…RQKL) and 1389-1410 (KIRQEDGQGPRPSSIEEKSTGS). A compositionally biased stretch (basic and acidic residues) spans 1148-1160 (DTVKRRPKAKEPD). Residues 1191 to 1215 (PELPPPPPPAEPPPADLMQLPPLPL) show a composition bias toward pro residues. Polar residues predominate over residues 1236-1247 (QPVSKIQGSPTP). Residue Ser1259 is modified to Phosphoserine. Thr1268 is subject to Phosphothreonine. A compositionally biased stretch (pro residues) spans 1268–1283 (TPPPVSPKPPPPPTAP). Low complexity-rich tracts occupy residues 1284–1299 (KPAKALAGLQSSSATP), 1309–1327 (PPAALIKPASSPPSQSASP), and 1345–1359 (PRAAASVVSGPPVAS). Ser1363 is subject to Phosphoserine. Basic and acidic residues predominate over residues 1389-1407 (KIRQEDGQGPRPSSIEEKS).

In terms of assembly, binds the CaM kinase domain of CASK. Forms a ternary complex with CASK and LIN7A, LIN7B or LIN7C. Competes with APBA1 that forms a similar complex with CASK and LIN7 proteins. The tripartite complex CASKIN1/CASK/LIN7(A/B/C) binds the cytoplasmic tail of NRXN1. Polymerizes, via the tandem SAM domains, to form long, 8 nM wide fibers, upon which other proteins can assemble.

The protein resides in the cytoplasm. May link the scaffolding protein CASK to downstream intracellular effectors. The chain is Caskin-1 (Caskin1) from Mus musculus (Mouse).